A 341-amino-acid polypeptide reads, in one-letter code: Glycerol-3-phosphate dehydrogenase [NAD(P)+] (341 aa).

NADPH-binding residues include serine 12, tryptophan 13, arginine 33, and lysine 107. Residues lysine 107, glycine 134, and threonine 136 each contribute to the sn-glycerol 3-phosphate site. Alanine 138 is an NADPH binding site. Sn-glycerol 3-phosphate contacts are provided by lysine 189, aspartate 242, serine 252, arginine 253, and asparagine 254. Catalysis depends on lysine 189, which acts as the Proton acceptor. Arginine 253 serves as a coordination point for NADPH. Residues valine 277 and glutamate 279 each coordinate NADPH.

Belongs to the NAD-dependent glycerol-3-phosphate dehydrogenase family.

The protein localises to the cytoplasm. The enzyme catalyses sn-glycerol 3-phosphate + NAD(+) = dihydroxyacetone phosphate + NADH + H(+). It carries out the reaction sn-glycerol 3-phosphate + NADP(+) = dihydroxyacetone phosphate + NADPH + H(+). The protein operates within membrane lipid metabolism; glycerophospholipid metabolism. In terms of biological role, catalyzes the reduction of the glycolytic intermediate dihydroxyacetone phosphate (DHAP) to sn-glycerol 3-phosphate (G3P), the key precursor for phospholipid synthesis. This Halothermothrix orenii (strain H 168 / OCM 544 / DSM 9562) protein is Glycerol-3-phosphate dehydrogenase [NAD(P)+].